Consider the following 283-residue polypeptide: Phospholipase C (283 aa).

A signal peptide spans 1 to 24 (MKKKVLALGAAITLVAPLQSVAFA). The propeptide occupies 25–38 (HENDGGQRFGVIPR). The Zn(2+) site is built by tryptophan 39, histidine 52, aspartate 93, histidine 107, histidine 156, aspartate 160, histidine 166, histidine 180, and glutamate 184. The Zn-dependent PLC domain maps to 39–283 (WSAEDKHKEG…QLWFDTYGNR (245 aa)).

It belongs to the bacterial zinc-metallophospholipase C family. As to quaternary structure, monomer. It depends on Zn(2+) as a cofactor.

The catalysed reaction is a 1,2-diacyl-sn-glycero-3-phosphocholine + H2O = phosphocholine + a 1,2-diacyl-sn-glycerol + H(+). Its function is as follows. Required, with sphingomyelinase, to effect target cell lysis (hemolysis). This chain is Phospholipase C (cerA), found in Bacillus cereus.